A 182-amino-acid chain; its full sequence is Oligoribonuclease (182 aa).

An Exonuclease domain is found at 7–170; the sequence is LIWIDLEMTG…EDIRESVEEL (164 aa). Y128 is a catalytic residue.

The protein belongs to the oligoribonuclease family.

It localises to the cytoplasm. 3'-to-5' exoribonuclease specific for small oligoribonucleotides. The chain is Oligoribonuclease from Hahella chejuensis (strain KCTC 2396).